We begin with the raw amino-acid sequence, 61 residues long: Small ribosomal subunit protein uS14 (61 aa).

4 residues coordinate Zn(2+): cysteine 24, cysteine 27, cysteine 40, and cysteine 43.

The protein belongs to the universal ribosomal protein uS14 family. Zinc-binding uS14 subfamily. As to quaternary structure, part of the 30S ribosomal subunit. Contacts proteins S3 and S10. Zn(2+) is required as a cofactor.

Binds 16S rRNA, required for the assembly of 30S particles and may also be responsible for determining the conformation of the 16S rRNA at the A site. The polypeptide is Small ribosomal subunit protein uS14 (Thermodesulfovibrio yellowstonii (strain ATCC 51303 / DSM 11347 / YP87)).